The sequence spans 251 residues: Ubiquinone/menaquinone biosynthesis C-methyltransferase UbiE (251 aa).

Residues Thr-74, Asp-95, 123–124, and Ser-140 each bind S-adenosyl-L-methionine; that span reads NA.

The protein belongs to the class I-like SAM-binding methyltransferase superfamily. MenG/UbiE family.

The catalysed reaction is a 2-demethylmenaquinol + S-adenosyl-L-methionine = a menaquinol + S-adenosyl-L-homocysteine + H(+). It carries out the reaction a 2-methoxy-6-(all-trans-polyprenyl)benzene-1,4-diol + S-adenosyl-L-methionine = a 5-methoxy-2-methyl-3-(all-trans-polyprenyl)benzene-1,4-diol + S-adenosyl-L-homocysteine + H(+). It participates in quinol/quinone metabolism; menaquinone biosynthesis; menaquinol from 1,4-dihydroxy-2-naphthoate: step 2/2. The protein operates within cofactor biosynthesis; ubiquinone biosynthesis. Methyltransferase required for the conversion of demethylmenaquinol (DMKH2) to menaquinol (MKH2) and the conversion of 2-polyprenyl-6-methoxy-1,4-benzoquinol (DDMQH2) to 2-polyprenyl-3-methyl-6-methoxy-1,4-benzoquinol (DMQH2). This Photorhabdus laumondii subsp. laumondii (strain DSM 15139 / CIP 105565 / TT01) (Photorhabdus luminescens subsp. laumondii) protein is Ubiquinone/menaquinone biosynthesis C-methyltransferase UbiE.